The primary structure comprises 745 residues: Multiple C2 domain and transmembrane region protein 13 (745 aa).

The disordered stretch occupies residues 1 to 30; the sequence is MAANKDEFSVKQISPKLGGERGARNPYGPT. 3 C2 domains span residues 21–139, 171–293, and 326–453; these read RGAR…PQRY, DASE…SAPA, and AEES…ACSY. Residues Asp56, Asp61, Asp106, and Asn110 each contribute to the Ca(2+) site. Helical transmembrane passes span 568-588 and 688-708; these read SLIV…LVGL and FYCW…PMWL.

It belongs to the MCTP family. Ca(2+) serves as cofactor. As to expression, expressed in incipient leaf primordia.

It localises to the cell membrane. The protein localises to the cytoplasm. In terms of biological role, may function as a signaling molecule by regulating the trafficking of other regulators. This is Multiple C2 domain and transmembrane region protein 13 from Arabidopsis thaliana (Mouse-ear cress).